The sequence spans 129 residues: MPLLRFDLIEGRDQSSLKKLLDVAHNVVVEAFDVPQQDRYQIVHEHPENHMIIEDTGLGFNRTKNLVVLSVTSKSRPEEKKQKFYRLLAERLESECGIASTDLIVSIVENDNADWSFGLGEAQFLTGKL.

P2 acts as the Proton acceptor; via imino nitrogen in catalysis.

It belongs to the 4-oxalocrotonate tautomerase family.

In terms of biological role, putative target of GltR. This chain is Probable tautomerase YrdN (yrdN), found in Bacillus subtilis (strain 168).